The chain runs to 329 residues: Segregation and condensation protein B (329 aa).

Disordered regions lie at residues M1–D39, I252–A274, and S286–E329.

The protein belongs to the ScpB family. Homodimer. Homodimerization may be required to stabilize the binding of ScpA to the Smc head domains. Component of the Structural Maintenance of Chromosome (SMC) condensin-like complex composed of ScpA, ScpB and the Smc homodimer. ScpA and ScpB bind to the head domain of Smc, the presence of the three proteins is required for the association of the complex with DNA.

It localises to the cytoplasm. In terms of biological role, a conditionally essential component of the chromosome segregation machinery. Required for chromosome condensation and partitioning. Important for positioning and anchoring of ParB-parS complexes (ori of replication) in the subpolar region, and of the ter replication site, as well as for segration of the ParB-parS complex and thus chromosome segregation. Probably acts via the formation of a condensin-like complex containing Smc, ScpA and ScpB that pulls DNA away from mid-cell into both cell halves. In Myxococcus xanthus (strain DK1622), this protein is Segregation and condensation protein B.